The chain runs to 130 residues: Small ribosomal subunit protein uS9 (130 aa).

This sequence belongs to the universal ribosomal protein uS9 family.

The chain is Small ribosomal subunit protein uS9 from Oceanobacillus iheyensis (strain DSM 14371 / CIP 107618 / JCM 11309 / KCTC 3954 / HTE831).